Reading from the N-terminus, the 504-residue chain is UDP-N-acetylmuramoylalanine--D-glutamate ligase (504 aa).

129–135 (GTNGKTT) is an ATP binding site.

This sequence belongs to the MurCDEF family.

The protein localises to the cytoplasm. The catalysed reaction is UDP-N-acetyl-alpha-D-muramoyl-L-alanine + D-glutamate + ATP = UDP-N-acetyl-alpha-D-muramoyl-L-alanyl-D-glutamate + ADP + phosphate + H(+). The protein operates within cell wall biogenesis; peptidoglycan biosynthesis. Cell wall formation. Catalyzes the addition of glutamate to the nucleotide precursor UDP-N-acetylmuramoyl-L-alanine (UMA). This Burkholderia mallei (strain ATCC 23344) protein is UDP-N-acetylmuramoylalanine--D-glutamate ligase.